Reading from the N-terminus, the 580-residue chain is Arginine--tRNA ligase (580 aa).

A 'HIGH' region motif is present at residues 131–141 (ANPTGPLHVGH).

It belongs to the class-I aminoacyl-tRNA synthetase family. Monomer.

It is found in the cytoplasm. It carries out the reaction tRNA(Arg) + L-arginine + ATP = L-arginyl-tRNA(Arg) + AMP + diphosphate. The protein is Arginine--tRNA ligase of Ruegeria sp. (strain TM1040) (Silicibacter sp.).